We begin with the raw amino-acid sequence, 36 residues long: Photosystem I reaction center subunit VIII (36 aa).

Residues phenylalanine 6–leucine 28 form a helical membrane-spanning segment.

This sequence belongs to the PsaI family.

It localises to the plastid. Its subcellular location is the chloroplast thylakoid membrane. May help in the organization of the PsaL subunit. This chain is Photosystem I reaction center subunit VIII, found in Panax ginseng (Korean ginseng).